We begin with the raw amino-acid sequence, 276 residues long: Diaminopimelate epimerase (276 aa).

Substrate is bound by residues Asn13, Gln46, and Asn66. Residue Cys75 is the Proton donor of the active site. Substrate-binding positions include 76-77 (GN), Asn159, Asn192, and 210-211 (ER). The active-site Proton acceptor is Cys219. 220–221 (GT) serves as a coordination point for substrate.

Belongs to the diaminopimelate epimerase family. As to quaternary structure, homodimer.

It is found in the cytoplasm. It catalyses the reaction (2S,6S)-2,6-diaminopimelate = meso-2,6-diaminopimelate. It functions in the pathway amino-acid biosynthesis; L-lysine biosynthesis via DAP pathway; DL-2,6-diaminopimelate from LL-2,6-diaminopimelate: step 1/1. Catalyzes the stereoinversion of LL-2,6-diaminopimelate (L,L-DAP) to meso-diaminopimelate (meso-DAP), a precursor of L-lysine and an essential component of the bacterial peptidoglycan. The polypeptide is Diaminopimelate epimerase (Pseudomonas putida (strain GB-1)).